The sequence spans 214 residues: Cdc42 effector protein 2 (214 aa).

S2 is subject to N-acetylserine. Positions 30-44 (ISPPLGDFRHTIHIG) constitute a CRIB domain. Phosphoserine is present on residues S31, S101, S137, S141, and S145. Residues 118–151 (ALTLPTTQAPPKPPRLHLESPQPSPKSSPQEAGN) form a disordered region.

It belongs to the BORG/CEP family. Interacts with CDC42 and RHOQ, in a GTP-dependent manner, and with SEPT7.

The protein resides in the endomembrane system. It localises to the cytoplasm. The protein localises to the cytoskeleton. Its function is as follows. Probably involved in the organization of the actin cytoskeleton. May act downstream of CDC42 to induce actin filament assembly leading to cell shape changes. Induces pseudopodia formation in fibroblasts in a CDC42-dependent manner. In Rattus norvegicus (Rat), this protein is Cdc42 effector protein 2 (Cdc42ep2).